The primary structure comprises 239 residues: 1-(5-phosphoribosyl)-5-[(5-phosphoribosylamino)methylideneamino] imidazole-4-carboxamide isomerase (239 aa).

Catalysis depends on Asp12, which acts as the Proton acceptor. Asp132 serves as the catalytic Proton donor.

This sequence belongs to the HisA/HisF family.

The protein localises to the cytoplasm. The enzyme catalyses 1-(5-phospho-beta-D-ribosyl)-5-[(5-phospho-beta-D-ribosylamino)methylideneamino]imidazole-4-carboxamide = 5-[(5-phospho-1-deoxy-D-ribulos-1-ylimino)methylamino]-1-(5-phospho-beta-D-ribosyl)imidazole-4-carboxamide. It participates in amino-acid biosynthesis; L-histidine biosynthesis; L-histidine from 5-phospho-alpha-D-ribose 1-diphosphate: step 4/9. In Natronomonas pharaonis (strain ATCC 35678 / DSM 2160 / CIP 103997 / JCM 8858 / NBRC 14720 / NCIMB 2260 / Gabara) (Halobacterium pharaonis), this protein is 1-(5-phosphoribosyl)-5-[(5-phosphoribosylamino)methylideneamino] imidazole-4-carboxamide isomerase.